A 72-amino-acid chain; its full sequence is MAKEDNIEMQGTILETLPNTMFRVELENGHVVTAHISGKMRKNYIRILTGDKVTVQLTPYDLSKGRIVFRSR.

One can recognise an S1-like domain in the interval 1–72 (MAKEDNIEMQ…SKGRIVFRSR (72 aa)).

The protein belongs to the IF-1 family. As to quaternary structure, component of the 30S ribosomal translation pre-initiation complex which assembles on the 30S ribosome in the order IF-2 and IF-3, IF-1 and N-formylmethionyl-tRNA(fMet); mRNA recruitment can occur at any time during PIC assembly.

Its subcellular location is the cytoplasm. In terms of biological role, one of the essential components for the initiation of protein synthesis. Stabilizes the binding of IF-2 and IF-3 on the 30S subunit to which N-formylmethionyl-tRNA(fMet) subsequently binds. Helps modulate mRNA selection, yielding the 30S pre-initiation complex (PIC). Upon addition of the 50S ribosomal subunit IF-1, IF-2 and IF-3 are released leaving the mature 70S translation initiation complex. This Shewanella pealeana (strain ATCC 700345 / ANG-SQ1) protein is Translation initiation factor IF-1.